A 642-amino-acid polypeptide reads, in one-letter code: Phosphomethylpyrimidine synthase (642 aa).

Substrate is bound by residues Asn-235, Met-264, Tyr-293, His-329, 349–351, 390–393, and Glu-429; these read SRG and DGLR. Residue His-433 coordinates Zn(2+). Tyr-456 serves as a coordination point for substrate. His-497 provides a ligand contact to Zn(2+). Residues Cys-577, Cys-580, and Cys-585 each contribute to the [4Fe-4S] cluster site.

It belongs to the ThiC family. In terms of assembly, homodimer. The cofactor is [4Fe-4S] cluster.

The enzyme catalyses 5-amino-1-(5-phospho-beta-D-ribosyl)imidazole + S-adenosyl-L-methionine = 4-amino-2-methyl-5-(phosphooxymethyl)pyrimidine + CO + 5'-deoxyadenosine + formate + L-methionine + 3 H(+). Its pathway is cofactor biosynthesis; thiamine diphosphate biosynthesis. Its function is as follows. Catalyzes the synthesis of the hydroxymethylpyrimidine phosphate (HMP-P) moiety of thiamine from aminoimidazole ribotide (AIR) in a radical S-adenosyl-L-methionine (SAM)-dependent reaction. The sequence is that of Phosphomethylpyrimidine synthase from Alteromonas mediterranea (strain DSM 17117 / CIP 110805 / LMG 28347 / Deep ecotype).